The primary structure comprises 159 residues: Serine-protein kinase RsbW (159 aa).

This sequence belongs to the anti-sigma-factor family.

It catalyses the reaction L-seryl-[protein] + ATP = O-phospho-L-seryl-[protein] + ADP + H(+). The catalysed reaction is L-threonyl-[protein] + ATP = O-phospho-L-threonyl-[protein] + ADP + H(+). Negative regulator of sigma-B activity. Phosphorylates and inactivates its specific antagonist protein, RsbV. Upon phosphorylation of RsbV, RsbW is released and binds to sigma-B, thereby blocking its ability to form an RNA polymerase holoenzyme (E-sigma-B). This chain is Serine-protein kinase RsbW, found in Staphylococcus aureus (strain MSSA476).